A 518-amino-acid polypeptide reads, in one-letter code: Xylose import ATP-binding protein XylG (518 aa).

2 ABC transporter domains span residues 6 to 245 (LQMN…VGRE) and 262 to 507 (FEAR…LSHS). ATP is bound at residue 38–45 (GENGAGKS).

This sequence belongs to the ABC transporter superfamily. Xylose importer (TC 3.A.1.2.4) family. The complex is composed of two ATP-binding proteins (XylG), two transmembrane proteins (XylH) and a solute-binding protein (XylF).

The protein resides in the cell inner membrane. The enzyme catalyses D-xylose(out) + ATP + H2O = D-xylose(in) + ADP + phosphate + H(+). Its function is as follows. Part of the ABC transporter complex XylFGH involved in xylose import. Responsible for energy coupling to the transport system. The sequence is that of Xylose import ATP-binding protein XylG from Pseudomonas syringae pv. syringae (strain B728a).